We begin with the raw amino-acid sequence, 66 residues long: UPF0337 protein SAG0606 (66 aa).

Residues 1–10 (MSQEKLKSKV) are compositionally biased toward basic and acidic residues. Residues 1–23 (MSQEKLKSKVEQASGSLKEGAGK) form a disordered region.

The protein belongs to the UPF0337 (CsbD) family.

The sequence is that of UPF0337 protein SAG0606 from Streptococcus agalactiae serotype V (strain ATCC BAA-611 / 2603 V/R).